Reading from the N-terminus, the 292-residue chain is MEGFLNLDKPAGLTSHDCIARLRRVLGERRIGHGGTLDPAATGVLPVAVGRATRLLRFLSEGKVYRATVRFGLSTDTDDLEGNILADAGAADLDLGRVQVHLQAFRGTISQVPPRYSAIHQEGERLYDLARRGVAIAEIAPRTVEIQALTVLDWYPGHYPELQIEIACSTGTYIRSIARDLGTALGTGATLARLLRTRSGPFALEASLPLAAVEAGFQAGTVPLIGPRTALAHLAAVHLEPPLAARWLMGQRVPGDCEGAFAQIWECETDRFLGVAACEAGSLQPLVVLPTL.

Asp38 serves as the catalytic Nucleophile.

It belongs to the pseudouridine synthase TruB family. Type 1 subfamily.

The enzyme catalyses uridine(55) in tRNA = pseudouridine(55) in tRNA. Functionally, responsible for synthesis of pseudouridine from uracil-55 in the psi GC loop of transfer RNAs. The polypeptide is tRNA pseudouridine synthase B (Gloeobacter violaceus (strain ATCC 29082 / PCC 7421)).